The sequence spans 158 residues: 6,7-dimethyl-8-ribityllumazine synthase (158 aa).

5-amino-6-(D-ribitylamino)uracil is bound by residues phenylalanine 23, 61-63 (SFE), and 85-87 (AVI). Residue 90-91 (ET) coordinates (2S)-2-hydroxy-3-oxobutyl phosphate. Residue histidine 93 is the Proton donor of the active site. Phenylalanine 118 contacts 5-amino-6-(D-ribitylamino)uracil. Arginine 132 provides a ligand contact to (2S)-2-hydroxy-3-oxobutyl phosphate.

This sequence belongs to the DMRL synthase family.

It carries out the reaction (2S)-2-hydroxy-3-oxobutyl phosphate + 5-amino-6-(D-ribitylamino)uracil = 6,7-dimethyl-8-(1-D-ribityl)lumazine + phosphate + 2 H2O + H(+). It participates in cofactor biosynthesis; riboflavin biosynthesis; riboflavin from 2-hydroxy-3-oxobutyl phosphate and 5-amino-6-(D-ribitylamino)uracil: step 1/2. Functionally, catalyzes the formation of 6,7-dimethyl-8-ribityllumazine by condensation of 5-amino-6-(D-ribitylamino)uracil with 3,4-dihydroxy-2-butanone 4-phosphate. This is the penultimate step in the biosynthesis of riboflavin. The sequence is that of 6,7-dimethyl-8-ribityllumazine synthase from Prochlorococcus marinus (strain MIT 9515).